Reading from the N-terminus, the 272-residue chain is 3-methyl-2-oxobutanoate hydroxymethyltransferase (272 aa).

Residues D54 and D93 each contribute to the Mg(2+) site. 3-methyl-2-oxobutanoate is bound by residues D54–S55, D93, and K121. E123 is a Mg(2+) binding site. The Proton acceptor role is filled by E190.

Belongs to the PanB family. In terms of assembly, homodecamer; pentamer of dimers. Requires Mg(2+) as cofactor.

Its subcellular location is the cytoplasm. It carries out the reaction 3-methyl-2-oxobutanoate + (6R)-5,10-methylene-5,6,7,8-tetrahydrofolate + H2O = 2-dehydropantoate + (6S)-5,6,7,8-tetrahydrofolate. Its pathway is cofactor biosynthesis; (R)-pantothenate biosynthesis; (R)-pantoate from 3-methyl-2-oxobutanoate: step 1/2. Catalyzes the reversible reaction in which hydroxymethyl group from 5,10-methylenetetrahydrofolate is transferred onto alpha-ketoisovalerate to form ketopantoate. This Janthinobacterium sp. (strain Marseille) (Minibacterium massiliensis) protein is 3-methyl-2-oxobutanoate hydroxymethyltransferase.